The sequence spans 476 residues: Cytochrome P450 6B5 (476 aa).

Cys443 contacts heme.

The protein belongs to the cytochrome P450 family. Heme serves as cofactor.

Its subcellular location is the endoplasmic reticulum membrane. It is found in the microsome membrane. The catalysed reaction is an organic molecule + reduced [NADPH--hemoprotein reductase] + O2 = an alcohol + oxidized [NADPH--hemoprotein reductase] + H2O + H(+). Its function is as follows. Enables the insect to feed on furanocoumarin-producing plants and evolved as an adaptation for detoxification of xanthotoxin and other furanocoumarins. The chain is Cytochrome P450 6B5 (CYP6B5) from Papilio glaucus (Eastern tiger swallowtail butterfly).